The primary structure comprises 462 residues: MEHRLWGGRFSEPTAAEMRRFNDSFRFDRRLADVDITGSIAWAGALAQAGLIDEDEYAALVRGLELVRAEFANGTFVPAEGDEDIHTAVERRLRELIGDAALKLHTGRSRNDQVATDMRLYTIGIARQLDRRLRDLQLALLTQAELHTDTLMPGYTHLQRAQPITFGHWCLAYIEMFARDRSRLRDAITRMRVLPLGAGALAGNALGIERERLTELLDEFDELAANSLDAVSDRDFVAEILFICALIGIHLSRLAEDIILYASAEFGFIELADAYSTGSSLMPQKKNPDSMELLRGKSGRLLGNVVTLLTVLKGLPLTYNKDMQEDKEPLFDSFDTLDLGLQVAAAALATMTVHPERMAAALDDAMLATDLADELVRRGIPFRVAHGKVGQLVRRAQTLGVSLRHLPLTEYQAVEPSLDAGVYAIFDMARSVAQKASYGGTAPQRVREQCRRWRTILVESEA.

It belongs to the lyase 1 family. Argininosuccinate lyase subfamily.

Its subcellular location is the cytoplasm. The catalysed reaction is 2-(N(omega)-L-arginino)succinate = fumarate + L-arginine. It functions in the pathway amino-acid biosynthesis; L-arginine biosynthesis; L-arginine from L-ornithine and carbamoyl phosphate: step 3/3. The sequence is that of Argininosuccinate lyase from Chloroflexus aggregans (strain MD-66 / DSM 9485).